The chain runs to 505 residues: Nicotinamide phosphoribosyltransferase (505 aa).

R196 serves as a coordination point for diphosphate. D219 is a binding site for beta-nicotinamide D-ribonucleotide. Diphosphate is bound by residues H246 and R314. Beta-nicotinamide D-ribonucleotide contacts are provided by residues 314 to 316 (RPD), 369 to 370 (GD), and R408.

This sequence belongs to the NAPRTase family.

The catalysed reaction is beta-nicotinamide D-ribonucleotide + diphosphate = 5-phospho-alpha-D-ribose 1-diphosphate + nicotinamide + H(+). It participates in cofactor biosynthesis; NAD(+) biosynthesis; nicotinamide D-ribonucleotide from 5-phospho-alpha-D-ribose 1-diphosphate and nicotinamide: step 1/1. With respect to regulation, 10-fold more active in the presence of saturating ATP. In terms of biological role, catalyzes the condensation of nicotinamide with 5-phosphoribosyl-1-pyrophosphate to yield nicotinamide mononucleotide, an intermediate in the biosynthesis of NAD. Functions in the nondeamidating salvage pathway for production of NAD from nicotinamide. Displays a strict preference for nicotinamide over nicotinate substrate. The sequence is that of Nicotinamide phosphoribosyltransferase from Acinetobacter baylyi (strain ATCC 33305 / BD413 / ADP1).